A 264-amino-acid chain; its full sequence is tRNA (guanine-N(1)-)-methyltransferase (264 aa).

S-adenosyl-L-methionine-binding positions include G125 and 145-150 (LGDFVL).

It belongs to the RNA methyltransferase TrmD family. As to quaternary structure, homodimer.

The protein resides in the cytoplasm. The enzyme catalyses guanosine(37) in tRNA + S-adenosyl-L-methionine = N(1)-methylguanosine(37) in tRNA + S-adenosyl-L-homocysteine + H(+). Functionally, specifically methylates guanosine-37 in various tRNAs. This chain is tRNA (guanine-N(1)-)-methyltransferase, found in Burkholderia ambifaria (strain MC40-6).